Reading from the N-terminus, the 394-residue chain is 8-amino-7-oxononanoate synthase (394 aa).

Arg-21 is a binding site for substrate. 112-113 serves as a coordination point for pyridoxal 5'-phosphate; it reads GY. Substrate is bound at residue His-137. 3 residues coordinate pyridoxal 5'-phosphate: Ser-183, His-211, and Thr-239. Lys-242 is modified (N6-(pyridoxal phosphate)lysine). Thr-358 provides a ligand contact to substrate.

Belongs to the class-II pyridoxal-phosphate-dependent aminotransferase family. BioF subfamily. Homodimer. It depends on pyridoxal 5'-phosphate as a cofactor.

It carries out the reaction 6-carboxyhexanoyl-[ACP] + L-alanine + H(+) = (8S)-8-amino-7-oxononanoate + holo-[ACP] + CO2. Its pathway is cofactor biosynthesis; biotin biosynthesis. Functionally, catalyzes the decarboxylative condensation of pimeloyl-[acyl-carrier protein] and L-alanine to produce 8-amino-7-oxononanoate (AON), [acyl-carrier protein], and carbon dioxide. The polypeptide is 8-amino-7-oxononanoate synthase (Paraburkholderia xenovorans (strain LB400)).